The sequence spans 100 residues: Small ribosomal subunit protein uS14c (100 aa).

Belongs to the universal ribosomal protein uS14 family. In terms of assembly, part of the 30S ribosomal subunit.

Its subcellular location is the plastid. The protein localises to the chloroplast. Functionally, binds 16S rRNA, required for the assembly of 30S particles. This chain is Small ribosomal subunit protein uS14c, found in Draba nemorosa (Woodland whitlowgrass).